The chain runs to 144 residues: UPF0292 protein MA_4098 (144 aa).

Residues 28-109 enclose the Toprim domain; the sequence is GAVIIVEGKR…KPELQIRNKL (82 aa). 3 residues coordinate Mg(2+): Glu-34, Asp-78, and Asp-80.

It belongs to the UPF0292 family. Mg(2+) is required as a cofactor.

This Methanosarcina acetivorans (strain ATCC 35395 / DSM 2834 / JCM 12185 / C2A) protein is UPF0292 protein MA_4098.